An 883-amino-acid polypeptide reads, in one-letter code: MANPQASPILHHPQNHLSLFHFRTTTSPRSFSSLHFRKPLLFLSSSSSFSSKLQQSEQQCNNHQVRHVSTVPVEYSTPTPPESDDFLSEIDRLKSLLSKLDVSKDLRRKDAVIDADSRVRRFFSENRGGLSKVFGYLGLNSNEMFLVKCVIAAGQEHALCMNYEEAFGEEEEEYTVRSSVKNALYALVEMIERFDVNSSGYKGRREMGTVLDSEEIAHFRKFLTFLEEIEQFYDCIGGIIGYQVMVLELLHQSSKRRNTNRSQLVEESLGCQYLEMHTPSVLDLTQEEDYASQAALWGIEGLPDLGEIYPLGGAADRLGLIDSETGECLPAAMLAHCGRTLLEGLIRDLQAREFLYFKLYGKQCVTPVAIMTSAAKNNHEHVSSLCERLKWFGRGQSNFRLFEQPLVPAVSAEDGQWIVSKPFVPVSKPGGHGVIWKLAYDKGVFNWFYDHGRKGATVRQVSNVVAATDVTLLALAGIGLRYNKKLGFASCKRNAGATEGINVLMEKKNFDGKWEYGISCIEYTEFDKFDISNRSPSSNGLQADFPANTNILYVDLHSAELIGSSSNAKSLPNMVLNTKKRIEYLDQYGDYHSVMGGRLECTMQNIADNFFNKFPSRCHGSLEDKLDTYIVYNERRKVTSSAKKKKPHASAALHQTPDGALLDILRNGYDLLTECDIKLPMIEANDKYVDSPPPYLILLHPALGPLWEVSRQKFKGGSISSCSELQLEIAEFSWNNVQVDGSLIVTAENAMGSTTPNDNGEPILQYGLRCGKCKLHNVNVVNRGIDWNSKSNVYWRNDVNRLETCKIILHGNAEFEASNVTIEGHHVFEVPDGHKLKITSGNAGLSINLEALKEEVMETGSWYWNYQLNGSHIHLQQVEVSQS.

Residues 1 to 72 constitute a chloroplast transit peptide; the sequence is MANPQASPIL…HQVRHVSTVP (72 aa).

Belongs to the UDPGP type 1 family. Mg(2+) serves as cofactor.

The protein resides in the plastid. It is found in the chloroplast. It catalyses the reaction alpha-D-glucose 1-phosphate + UTP + H(+) = UDP-alpha-D-glucose + diphosphate. Its activity is regulated as follows. Inhibited by pyrophosphate. Involved in the biosynthesis of sulfolipids in the chloroplast. Catalyzes the first committed step in sulfolipid biosynthesis. Converts glucose 1-phosphate to UDP-glucose, the precursor of the polar head of sulfolipid. In addition to glucose 1-phosphate, can use galactose 1-phosphate, but with much lower activity. No uridyltransferase activity with other hexose monophosphates. Specific for UTP and cannot use ATP, CTP, and GTP. The chain is UTP--glucose-1-phosphate uridylyltransferase 3, chloroplastic from Arabidopsis thaliana (Mouse-ear cress).